We begin with the raw amino-acid sequence, 1186 residues long: MAEATTNTTTIIARADQHDIDLHKASDRVNFGSIREPIDVPYLLGVQTDSFDWLIGNERWQKRVQEDLENGTNTVPHTSGLDEVFQEISPIENFAQTMSLTFSDPYFEEPRHTVQECKEKDYTYSAPLYVNAEFENGDTGEIKSQTVFMGDFPLQTPHGTFIIGGTERVIVSQLVRSPGVYFDRSQDRTSDKEVFGAKIIPSRGAWLEFEIDKRDVLGVRVDRKRKQSAIVFLMAIGMTKDEIADAFKDYPLVMDALAKETVQTQDEALTDLYRKIRPADTPTPEAGKNLLDSFYFNTKRYDLARVGRYKINRKLGLEKDVNDRSLSREDIIATIKYLVTLHAGETKFPGKRDGQDVDLRVDVDDIDHFGNRRIRQVGELIQNQLRTGLSRMERVVRERMTTQDPEAITPQSLINIRPVNATIKEFFGTSQLSQFMDQNNPLAGVTNKRRLSALGPGGLSRDRASMEVRDVHPSHFGRMCPIESPEGPNIGLIGSLATFGRINPFGFIETPYRKVVNGHVTDEVEYMTADRDAEHVIAQANQELDENGNFVKKQALARVGEEEAVDVPVSSVDYMDVSPRQMVSVGASLIPFLEHDEGHRALMGTNMQRQAVPLIESERPLVGTGAEWRAAVDSGDVILAEKPGVVTYVSADIIRTMNDDGTTSSYKLAKFQRSNQTTCYNQVPLIHDGERVEAGTVLADGPATQKGEMALGKNLLIAFMPWNGYNYEDAVIISQRLVQDDTLSSIHIEEYEIDARETKLGAEEITRDLPNVGEDAVANLDERGIIRIGAEVEAGDILVGKVTPKGETELTPEERLLRAIFGEKSREVRDTSLRVPHGETGTVIAVKEITREDAEEDGDELPNGVNQMIRVYIAQHRKITQGDKLSGRHGNKGVISRILPEEDMPFLADGTPVDIMLNPLGVPSRMNLGQVLELHLGWIAHAGWDISLDPDAEAAWKKYVPQGAEKGAPGTPVATPVFDGVRPETIKGLLSCTLPDRDGNKLVGPDGKATLFDGRTGEPFPKPISVGYMYMLKLHHLVDDKIHARSTGPYSMITQQPLGGKAQFGGQRFGEMEVWALEAYGAAYTLHEMMTTKSDDVDGRVRVYGAIVKGENLPPAGIPESFKVLLKEMQSLSLNVEVLNADGVAIDMKEEDDDPSTSSDDLGFNIGARPDAAAKEDQVAEEPEFQ.

Residues 1149–1186 (KEEDDDPSTSSDDLGFNIGARPDAAAKEDQVAEEPEFQ) form a disordered region.

The protein belongs to the RNA polymerase beta chain family. As to quaternary structure, the RNAP catalytic core consists of 2 alpha, 1 beta, 1 beta' and 1 omega subunit. When a sigma factor is associated with the core the holoenzyme is formed, which can initiate transcription.

The catalysed reaction is RNA(n) + a ribonucleoside 5'-triphosphate = RNA(n+1) + diphosphate. DNA-dependent RNA polymerase catalyzes the transcription of DNA into RNA using the four ribonucleoside triphosphates as substrates. The protein is DNA-directed RNA polymerase subunit beta of Bifidobacterium adolescentis (strain ATCC 15703 / DSM 20083 / NCTC 11814 / E194a).